Here is a 463-residue protein sequence, read N- to C-terminus: Glycine--tRNA ligase (463 aa).

Substrate-binding residues include Arg100 and Glu175. Residues 207–209 (RNE), 217–222 (FRTREF), 291–292 (EL), and 335–338 (GADR) each bind ATP. 222–226 (FEQME) contacts substrate. 331–335 (EPSLG) is a binding site for substrate.

Belongs to the class-II aminoacyl-tRNA synthetase family. Homodimer.

It is found in the cytoplasm. It carries out the reaction tRNA(Gly) + glycine + ATP = glycyl-tRNA(Gly) + AMP + diphosphate. Its function is as follows. Catalyzes the attachment of glycine to tRNA(Gly). This is Glycine--tRNA ligase from Clostridium tetani (strain Massachusetts / E88).